The following is a 26-amino-acid chain: Aralin B chain (26 aa).

Disulfide-linked dimer of A and B chains. Glycosylated. High-mannose type oligosaccharides.

Lectin specific for galactose (Gal) and its derivatives. Induces apoptosis. Has cytotoxic activity against several human cancer cell lines. Is less cytotoxic to normal human cells. In Aralia elata (Japanese angelica tree), this protein is Aralin B chain.